The chain runs to 312 residues: Gamma-soluble NSF attachment protein (312 aa).

Residues 281–312 (KKKSPATPQAKPDGVTATAADEEEDEYSGGLC) form a disordered region. Ser-284 is subject to Phosphoserine. Thr-287 is modified (phosphothreonine). The span at 300–312 (ADEEEDEYSGGLC) shows a compositional bias: acidic residues. At Ser-308 the chain carries Phosphoserine.

The protein belongs to the SNAP family. In terms of assembly, interacts with RAB11FIP5. Interacts with VTI1A.

It localises to the membrane. The protein localises to the golgi apparatus. Required for vesicular transport between the endoplasmic reticulum and the Golgi apparatus. The protein is Gamma-soluble NSF attachment protein of Homo sapiens (Human).